Reading from the N-terminus, the 228-residue chain is Urease accessory protein UreF (228 aa).

The protein belongs to the UreF family. UreD, UreF and UreG form a complex that acts as a GTP-hydrolysis-dependent molecular chaperone, activating the urease apoprotein by helping to assemble the nickel containing metallocenter of UreC. The UreE protein probably delivers the nickel.

It is found in the cytoplasm. In terms of biological role, required for maturation of urease via the functional incorporation of the urease nickel metallocenter. The polypeptide is Urease accessory protein UreF (Prochlorococcus marinus (strain AS9601)).